Reading from the N-terminus, the 339-residue chain is Phenylalanine--tRNA ligase alpha subunit (339 aa).

Position 254 (glutamate 254) interacts with Mg(2+).

The protein belongs to the class-II aminoacyl-tRNA synthetase family. Phe-tRNA synthetase alpha subunit type 1 subfamily. As to quaternary structure, tetramer of two alpha and two beta subunits. Mg(2+) serves as cofactor.

It localises to the cytoplasm. It carries out the reaction tRNA(Phe) + L-phenylalanine + ATP = L-phenylalanyl-tRNA(Phe) + AMP + diphosphate + H(+). The polypeptide is Phenylalanine--tRNA ligase alpha subunit (Clostridium perfringens (strain SM101 / Type A)).